A 475-amino-acid polypeptide reads, in one-letter code: ISWI one complex protein 4 (475 aa).

The residue at position 2 (serine 2) is a Phosphoserine. Phosphothreonine is present on threonine 9. Disordered regions lie at residues 42 to 84 (VSVH…DFGE), 181 to 296 (EEEY…IKYH), and 454 to 475 (EMDR…KVGA). A phosphoserine mark is found at serine 65 and serine 73. Acidic residues-rich tracts occupy residues 72 to 84 (QSEE…DFGE), 181 to 193 (EEEY…EENE), and 241 to 252 (ASEEEEEEEEEK). Serine 242 is modified (phosphoserine). The segment covering 259–294 (KRPQRTKTKKVVVSKTKPNPKTKAKKEKPKPPKPIK) has biased composition (basic residues). A compositionally biased stretch (basic and acidic residues) spans 456-475 (DREKPSFSEDVKEEESKVGA).

Component of the ISW1B complex, which at least consists of ISW1, IOC2 and IOC4.

The protein localises to the nucleus. Functions as a component of the ISW1B complex, which acts in remodeling the chromatin by catalyzing an ATP-dependent alteration in the structure of nucleosomal DNA. The ISW1B complex acts within coding regions to control the amount of RNA polymerase II released into productive elongation and to coordinate elongation with termination and pre-mRNA processing. This is ISWI one complex protein 4 (IOC4) from Saccharomyces cerevisiae (strain ATCC 204508 / S288c) (Baker's yeast).